Here is a 151-residue protein sequence, read N- to C-terminus: UPF0178 protein YaiI (151 aa).

It belongs to the UPF0178 family.

This Salmonella choleraesuis (strain SC-B67) protein is UPF0178 protein YaiI.